Consider the following 154-residue polypeptide: 6,7-dimethyl-8-ribityllumazine synthase (154 aa).

Residues F23, 57-59 (AYE), and 81-83 (AVI) each bind 5-amino-6-(D-ribitylamino)uracil. Residue 86 to 87 (AT) coordinates (2S)-2-hydroxy-3-oxobutyl phosphate. H89 (proton donor) is an active-site residue. Residue F114 participates in 5-amino-6-(D-ribitylamino)uracil binding. R128 is a (2S)-2-hydroxy-3-oxobutyl phosphate binding site.

This sequence belongs to the DMRL synthase family.

The catalysed reaction is (2S)-2-hydroxy-3-oxobutyl phosphate + 5-amino-6-(D-ribitylamino)uracil = 6,7-dimethyl-8-(1-D-ribityl)lumazine + phosphate + 2 H2O + H(+). It participates in cofactor biosynthesis; riboflavin biosynthesis; riboflavin from 2-hydroxy-3-oxobutyl phosphate and 5-amino-6-(D-ribitylamino)uracil: step 1/2. Functionally, catalyzes the formation of 6,7-dimethyl-8-ribityllumazine by condensation of 5-amino-6-(D-ribitylamino)uracil with 3,4-dihydroxy-2-butanone 4-phosphate. This is the penultimate step in the biosynthesis of riboflavin. The chain is 6,7-dimethyl-8-ribityllumazine synthase from Desulforamulus reducens (strain ATCC BAA-1160 / DSM 100696 / MI-1) (Desulfotomaculum reducens).